The primary structure comprises 140 residues: MRKYRVAGLVAALLVLHSLATPSAQAEAHRAGGEGEEKMSSDGGPVLGGVEPVGNENDLHLVDLARFAVTEHNKKANSLLEFEKLVSVKQQVVAGTLYYFTIEVKEGDAKKLYEAKVWEKPWMDFKELQEFKPVDASANA.

The N-terminal stretch at 1 to 26 (MRKYRVAGLVAALLVLHSLATPSAQA) is a signal peptide. Residues 48–135 (GGVEPVGNEN…KELQEFKPVD (88 aa)) enclose the Cystatin domain. The short motif at 91 to 95 (QVVAG) is the Secondary area of contact element.

Belongs to the cystatin family. Phytocystatin subfamily.

It localises to the secreted. There are two distinct cystatins in rice seeds (Oryzacystatin-1 and -2) with different specificities against cysteine proteinases. May be involved in the control of germination by inhibition of endogenous cysteine proteinases. May play a role in defense by inhibiting exogenous proteases such as those present in digestive tracks of insects and nematodes. This Oryza sativa subsp. japonica (Rice) protein is Cysteine proteinase inhibitor 1.